We begin with the raw amino-acid sequence, 106 residues long: Large ribosomal subunit protein eL30 (106 aa).

The protein belongs to the eukaryotic ribosomal protein eL30 family. In terms of assembly, component of the large ribosomal subunit. Mature ribosomes consist of a small (40S) and a large (60S) subunit. The 40S subunit contains about 32 different proteins and 1 molecule of RNA (18S). The 60S subunit contains 45 different proteins and 3 molecules of RNA (25S, 5.8S and 5S).

It is found in the cytoplasm. Its function is as follows. Component of the ribosome, a large ribonucleoprotein complex responsible for the synthesis of proteins in the cell. The small ribosomal subunit (SSU) binds messenger RNAs (mRNAs) and translates the encoded message by selecting cognate aminoacyl-transfer RNA (tRNA) molecules. The large subunit (LSU) contains the ribosomal catalytic site termed the peptidyl transferase center (PTC), which catalyzes the formation of peptide bonds, thereby polymerizing the amino acids delivered by tRNAs into a polypeptide chain. The nascent polypeptides leave the ribosome through a tunnel in the LSU and interact with protein factors that function in enzymatic processing, targeting, and the membrane insertion of nascent chains at the exit of the ribosomal tunnel. The chain is Large ribosomal subunit protein eL30 from Candida albicans (strain SC5314 / ATCC MYA-2876) (Yeast).